The chain runs to 60 residues: Andropin (60 aa).

Residues 1-23 form the signal peptide; sequence MKYFVVLVVLALILAIAVGPSDA.

This sequence belongs to the andropin family. Ejaculatory duct of adult males.

Its subcellular location is the secreted. In terms of biological role, male-specific peptide with moderate activity against Gram-positive bacteria. In Drosophila simulans (Fruit fly), this protein is Andropin (Anp).